Consider the following 180-residue polypeptide: Adenine phosphoribosyltransferase (180 aa).

Ser2 is subject to N-acetylserine. Phosphoserine occurs at positions 15 and 30. At Tyr60 the chain carries Phosphotyrosine. A Phosphoserine modification is found at Ser66. Residue Lys114 is modified to N6-acetyllysine. Thr135 bears the Phosphothreonine mark.

The protein belongs to the purine/pyrimidine phosphoribosyltransferase family. As to quaternary structure, homodimer.

It localises to the cytoplasm. It carries out the reaction AMP + diphosphate = 5-phospho-alpha-D-ribose 1-diphosphate + adenine. It functions in the pathway purine metabolism; AMP biosynthesis via salvage pathway; AMP from adenine: step 1/1. Functionally, catalyzes a salvage reaction resulting in the formation of AMP, that is energically less costly than de novo synthesis. This is Adenine phosphoribosyltransferase from Stochomys longicaudatus (Target rat).